A 356-amino-acid polypeptide reads, in one-letter code: D-alanine--D-alanine ligase (356 aa).

The 206-residue stretch at 134-339 (KQLFEHRGLP…YPELITKLIE (206 aa)) folds into the ATP-grasp domain. Position 167–222 (167–222 (NDKLNYPVFVKPANLGSSVGISKCNNEAELKEGIKEAFQFDRKLVIEQGVNAREIE)) interacts with ATP. 3 residues coordinate Mg(2+): Asp-293, Glu-306, and Asn-308.

The protein belongs to the D-alanine--D-alanine ligase family. Mg(2+) is required as a cofactor. The cofactor is Mn(2+).

The protein resides in the cytoplasm. The catalysed reaction is 2 D-alanine + ATP = D-alanyl-D-alanine + ADP + phosphate + H(+). It participates in cell wall biogenesis; peptidoglycan biosynthesis. Its function is as follows. Cell wall formation. This Staphylococcus aureus (strain Mu3 / ATCC 700698) protein is D-alanine--D-alanine ligase.